Reading from the N-terminus, the 695-residue chain is Nucleoprotein (695 aa).

Coiled-coil stretches lie at residues 316 to 341 and 372 to 400; these read VNVGEQYQQLREAAHDAEVKLQRRHE and QTLAVLSQKREKLARLAAEIENNIAEDQG. Disordered stretches follow at residues 426-458 and 472-611; these read RSINRPTALPPPVDNKIEHETEEDSSSSSSFVD and TLEN…EDTR. Residues 474–484 are compositionally biased toward polar residues; that stretch reads ENSVMAPSTTL. The span at 502–516 shows a compositional bias: basic and acidic residues; it reads ISQKKQGNESTDPAR. Positions 529–547 are enriched in acidic residues; the sequence is QEDDESEYTTDSQESDDQP. The PTAP/PSAP motif motif lies at 603–606; sequence PSAP.

Belongs to the filoviruses nucleoprotein family. In terms of assembly, homooligomer. Homomultimerizes to form the nucleocapsid. Binds to viral genomic RNA. Interacts with VP35 and VP30 to form the nucleocapsid. Also interacts with VP24 and VP40. Post-translationally, phosphorylated.

It localises to the virion. The protein localises to the host cytoplasm. Its function is as follows. Encapsidates the genome, protecting it from nucleases. The encapsidated genomic RNA is termed the nucleocapsid and serves as template for transcription and replication. During replication, encapsidation by NP is coupled to RNA synthesis and all replicative products are resistant to nucleases. This chain is Nucleoprotein (NP), found in Lake Victoria marburgvirus (strain Ravn-87) (MARV).